The chain runs to 260 residues: uncharacterized protein (260 aa).

The stretch at 214-252 forms a coiled coil; it reads IHQFIETEIERIMEAAKELKAEKKDMTSELNRLLLNTVE.

This is an uncharacterized protein from Bacillus subtilis (strain 168).